Here is a 281-residue protein sequence, read N- to C-terminus: 2-dehydro-3-deoxyphosphooctonate aldolase (281 aa).

This sequence belongs to the KdsA family.

It is found in the cytoplasm. It carries out the reaction D-arabinose 5-phosphate + phosphoenolpyruvate + H2O = 3-deoxy-alpha-D-manno-2-octulosonate-8-phosphate + phosphate. Its pathway is carbohydrate biosynthesis; 3-deoxy-D-manno-octulosonate biosynthesis; 3-deoxy-D-manno-octulosonate from D-ribulose 5-phosphate: step 2/3. The protein operates within bacterial outer membrane biogenesis; lipopolysaccharide biosynthesis. This Psychromonas ingrahamii (strain DSM 17664 / CCUG 51855 / 37) protein is 2-dehydro-3-deoxyphosphooctonate aldolase.